Reading from the N-terminus, the 147-residue chain is Protein phosphatase 1 regulatory subunit 14A (147 aa).

The segment covering 1–11 (MAAQRLGKRVL) has biased composition (basic residues). The disordered stretch occupies residues 1–37 (MAAQRLGKRVLSKLQSPSRARGPGGSPGGLQKRHARV). Ser-26 carries the phosphoserine modification. Residues 35-120 (ARVTVKYDRR…LLAKLQGLHR (86 aa)) form an inhibitory region. A Phosphothreonine; by PKC modification is found at Thr-38. Positions 118 to 147 (LHRQPGLRQPSPSHDGSLSPLQDRARTAHP) are disordered. The segment covering 127-137 (PSPSHDGSLSP) has biased composition (polar residues). 3 positions are modified to phosphoserine: Ser-128, Ser-134, and Ser-136.

It belongs to the PP1 inhibitor family. Isoform 1 is detected in aorta and testis. Isoform 2 is detected in aorta.

The protein resides in the cytoplasm. Its function is as follows. Inhibitor of PPP1CA. Has over 1000-fold higher inhibitory activity when phosphorylated, creating a molecular switch for regulating the phosphorylation status of PPP1CA substrates and smooth muscle contraction. The chain is Protein phosphatase 1 regulatory subunit 14A (PPP1R14A) from Homo sapiens (Human).